Here is a 491-residue protein sequence, read N- to C-terminus: Bifunctional protein HldE (491 aa).

The interval 1 to 330 is ribokinase; it reads MDRKMVESLF…AAVSLEHRDS (330 aa). ATP is bound at residue 205–208; the sequence is NRKE. Asp-275 is an active-site residue. Residues 356-491 are cytidylyltransferase; it reads FTNGCFDLLH…KVLERYTDEQ (136 aa).

It in the N-terminal section; belongs to the carbohydrate kinase PfkB family. The protein in the C-terminal section; belongs to the cytidylyltransferase family. In terms of assembly, homodimer.

The enzyme catalyses D-glycero-beta-D-manno-heptose 7-phosphate + ATP = D-glycero-beta-D-manno-heptose 1,7-bisphosphate + ADP + H(+). It catalyses the reaction D-glycero-beta-D-manno-heptose 1-phosphate + ATP + H(+) = ADP-D-glycero-beta-D-manno-heptose + diphosphate. The protein operates within nucleotide-sugar biosynthesis; ADP-L-glycero-beta-D-manno-heptose biosynthesis; ADP-L-glycero-beta-D-manno-heptose from D-glycero-beta-D-manno-heptose 7-phosphate: step 1/4. It participates in nucleotide-sugar biosynthesis; ADP-L-glycero-beta-D-manno-heptose biosynthesis; ADP-L-glycero-beta-D-manno-heptose from D-glycero-beta-D-manno-heptose 7-phosphate: step 3/4. In terms of biological role, catalyzes the phosphorylation of D-glycero-D-manno-heptose 7-phosphate at the C-1 position to selectively form D-glycero-beta-D-manno-heptose-1,7-bisphosphate. Functionally, catalyzes the ADP transfer from ATP to D-glycero-beta-D-manno-heptose 1-phosphate, yielding ADP-D-glycero-beta-D-manno-heptose. This chain is Bifunctional protein HldE, found in Trichlorobacter lovleyi (strain ATCC BAA-1151 / DSM 17278 / SZ) (Geobacter lovleyi).